The chain runs to 93 residues: Putative membrane protein insertion efficiency factor (93 aa).

It belongs to the UPF0161 family.

The protein resides in the cell inner membrane. Functionally, could be involved in insertion of integral membrane proteins into the membrane. The polypeptide is Putative membrane protein insertion efficiency factor (Cupriavidus taiwanensis (strain DSM 17343 / BCRC 17206 / CCUG 44338 / CIP 107171 / LMG 19424 / R1) (Ralstonia taiwanensis (strain LMG 19424))).